A 122-amino-acid chain; its full sequence is Large ribosomal subunit protein uL18 (122 aa).

It belongs to the universal ribosomal protein uL18 family. Part of the 50S ribosomal subunit; part of the 5S rRNA/L5/L18/L25 subcomplex. Contacts the 5S and 23S rRNAs.

Its function is as follows. This is one of the proteins that bind and probably mediate the attachment of the 5S RNA into the large ribosomal subunit, where it forms part of the central protuberance. The protein is Large ribosomal subunit protein uL18 of Prochlorococcus marinus (strain AS9601).